The primary structure comprises 627 residues: Pescadillo homolog (627 aa).

The BRCT domain occupies 321-414 (RLRTLFKGLK…QLLPTNKYFI (94 aa)). Disordered regions lie at residues 450–469 (HVQS…ETVD), 488–562 (YKKF…LQAR), and 595–627 (TIEA…KLGK). Phosphoserine is present on residues Ser-453 and Ser-457. 2 stretches are compositionally biased toward acidic residues: residues 454–469 (DDDS…ETVD) and 497–521 (VNED…EELD). The stretch at 507–538 (DDDNEDDDEEEEELDEKTKRLQEEKQKMSVQS) forms a coiled coil. The segment covering 522-533 (EKTKRLQEEKQK) has biased composition (basic and acidic residues). The segment covering 540–549 (KVHKVNKRQV) has biased composition (basic residues). Basic and acidic residues-rich tracts occupy residues 550–559 (HKAEVDEHRL) and 595–615 (TIEA…RKEA). Positions 582-625 (KEKEEWLLRKKRRTIEASEKEARKTAKREARKEAAAAAAKASKL) form a coiled coil. Positions 616–627 (AAAAAKASKLGK) are enriched in low complexity.

The protein belongs to the pescadillo family.

Its subcellular location is the nucleus. It localises to the nucleolus. The protein localises to the nucleoplasm. In terms of biological role, required for maturation of ribosomal RNAs and formation of the large ribosomal subunit. The polypeptide is Pescadillo homolog (Drosophila sechellia (Fruit fly)).